The following is a 493-amino-acid chain: Vacuolar-processing enzyme (493 aa).

A signal peptide spans 1 to 19 (MGSSQLSTLLFFTIVVTFL). Residue N147 is glycosylated (N-linked (GlcNAc...) asparagine). H174 is an active-site residue. The active-site Nucleophile is the C216. The cysteines at positions 249 and 263 are disulfide-linked. 2 N-linked (GlcNAc...) asparagine glycosylation sites follow: N295 and N331. Intrachain disulfides connect C429/C459 and C441/C476.

Belongs to the peptidase C13 family.

Asparagine-specific endopeptidase involved in the processing of vacuolar seed protein precursors into the mature forms. The sequence is that of Vacuolar-processing enzyme from Vicia sativa (Spring vetch).